A 371-amino-acid polypeptide reads, in one-letter code: MKKAISIFPKEFGFFPYIFLVYTIMPFLSLLKESGVKQGIGYGMLLLFVAAYRQLFCSVGKASFTYWLIVQMAVILMYSVFYNITYIYLGFFPANFVGYYKEKTNFNRAFCALIFILLFPCLYQFIANSVSLRELFSVLPFLVIMLISPFGIRSMFRRIELEAKLAQANEQIKELSKREERVRIARDLHDTLGHTLSLLTLKSQLIQRLAASDPERTKLEAKEMETSSRSALKQVRELVSDMRTVTITEELVNIQHILRAGNITFQYEGADDFSVISPVTQNIISMCMREAVTNIIKHSKATHCAITISQFADKMRIVIRDDGKGAPKEKMFGNGLWGMEERLMLIEGGLTVSDHNGTVVALTIPLIKKAE.

Residues 1-10 (MKKAISIFPK) are Extracellular-facing. The chain crosses the membrane as a helical span at residues 11 to 31 (EFGFFPYIFLVYTIMPFLSLL). At 32-38 (KESGVKQ) the chain is on the cytoplasmic side. A helical membrane pass occupies residues 39–59 (GIGYGMLLLFVAAYRQLFCSV). The Extracellular portion of the chain corresponds to 60 to 71 (GKASFTYWLIVQ). The helical transmembrane segment at 72 to 92 (MAVILMYSVFYNITYIYLGFF) threads the bilayer. Residues 93-109 (PANFVGYYKEKTNFNRA) lie on the Cytoplasmic side of the membrane. Residues 110–130 (FCALIFILLFPCLYQFIANSV) traverse the membrane as a helical segment. At 131–135 (SLREL) the chain is on the extracellular side. The chain crosses the membrane as a helical span at residues 136-156 (FSVLPFLVIMLISPFGIRSMF). The Cytoplasmic segment spans residues 157–371 (RRIELEAKLA…LTIPLIKKAE (215 aa)). Positions 187-368 (DLHDTLGHTL…VVALTIPLIK (182 aa)) constitute a Histidine kinase domain. The residue at position 189 (histidine 189) is a Phosphohistidine; by autocatalysis.

It localises to the cell membrane. It carries out the reaction ATP + protein L-histidine = ADP + protein N-phospho-L-histidine.. In terms of biological role, member of the two-component regulatory system YvfT/YvfU. Probably activates YvfU by phosphorylation. The chain is Sensor histidine kinase YvfT (yvfT) from Bacillus subtilis (strain 168).